The primary structure comprises 256 residues: Zinc import ATP-binding protein ZnuC 1 (256 aa).

The region spanning 5–220 (LTLQDVCVVF…PKYIALFGQQ (216 aa)) is the ABC transporter domain. 37 to 44 (GPNGAGKS) contributes to the ATP binding site. The interval 232–256 (HHHNHDLSGEPSDGSCCSKNKKAHQ) is disordered.

This sequence belongs to the ABC transporter superfamily. Zinc importer (TC 3.A.1.15.5) family. The complex is composed of two ATP-binding proteins (ZnuC), two transmembrane proteins (ZnuB) and a solute-binding protein (ZnuA).

It is found in the cell inner membrane. The enzyme catalyses Zn(2+)(out) + ATP(in) + H2O(in) = Zn(2+)(in) + ADP(in) + phosphate(in) + H(+)(in). Part of the ABC transporter complex ZnuABC involved in zinc import. Responsible for energy coupling to the transport system. The chain is Zinc import ATP-binding protein ZnuC 1 from Aliivibrio fischeri (strain ATCC 700601 / ES114) (Vibrio fischeri).